Reading from the N-terminus, the 469-residue chain is MSAPRTLYDKIWDDHLVDSQADGTCLLYIDRHLVHEVTSPQAFEGLRIAGRKVRAPEKTLAVVDHNVPTSPDRHLGIKNEESRIQVEALARNAADFGVEYYSESDKRQGIVHIVGPEQGFTLPGMTIVCGDSHTSTHGAFGALAHGIGTSEVEHVLATQTLIQKKAKNMLVRVDGQLPPGVTAKDIILAIIGEIGTAGGTGHVIEFAGEAIRSLSMEGRMTVCNMTIEGGARAGLIAPDETTFAYIEDRPRAPKGEAWDMAVEYWKTLHTDEGAHYDRVVVLDAANLPPIVSWGSSPEDVVSVQGVVPNPDEIPDETKRTSKWRALDYMGLKPGTRITDIAIDRVFIGSCTNGRIEDLRAVAKVVEGRKVAPTVSAMIVPGSGLVKEQAEVEGLDKIFREAGFDWREPGCSMCLAMNDDRLKPGERCASTSNRNFEGRQGFKGRTHLLSPAMAAAAAIAGHFVDIREWK.

The [4Fe-4S] cluster site is built by Cys-350, Cys-410, and Cys-413.

The protein belongs to the aconitase/IPM isomerase family. LeuC type 1 subfamily. As to quaternary structure, heterodimer of LeuC and LeuD. Requires [4Fe-4S] cluster as cofactor.

It carries out the reaction (2R,3S)-3-isopropylmalate = (2S)-2-isopropylmalate. It participates in amino-acid biosynthesis; L-leucine biosynthesis; L-leucine from 3-methyl-2-oxobutanoate: step 2/4. Functionally, catalyzes the isomerization between 2-isopropylmalate and 3-isopropylmalate, via the formation of 2-isopropylmaleate. The protein is 3-isopropylmalate dehydratase large subunit of Sinorhizobium medicae (strain WSM419) (Ensifer medicae).